The following is a 248-amino-acid chain: NADH dehydrogenase [ubiquinone] flavoprotein 2, mitochondrial (248 aa).

Residues Met1–Asn31 constitute a mitochondrion transit peptide. 4 residues coordinate [2Fe-2S] cluster: Cys134, Cys139, Cys175, and Cys179. Tyr192 bears the Phosphotyrosine; by SRC mark. The disordered stretch occupies residues Gly229–Leu248.

It belongs to the complex I 24 kDa subunit family. In terms of assembly, core subunit of respiratory chain NADH dehydrogenase (Complex I) which is composed of 45 different subunits. This is a component of the flavoprotein-sulfur (FP) fragment of the enzyme. It depends on [2Fe-2S] cluster as a cofactor.

The protein localises to the mitochondrion inner membrane. It catalyses the reaction a ubiquinone + NADH + 5 H(+)(in) = a ubiquinol + NAD(+) + 4 H(+)(out). Core subunit of the mitochondrial membrane respiratory chain NADH dehydrogenase (Complex I) which catalyzes electron transfer from NADH through the respiratory chain, using ubiquinone as an electron acceptor. Parts of the peripheral arm of the enzyme, where the electrons from NADH are accepted by flavin mononucleotide (FMN) and then passed along a chain of iron-sulfur clusters by electron tunnelling to the final acceptor ubiquinone. Contains one iron-sulfur cluster. The protein is NADH dehydrogenase [ubiquinone] flavoprotein 2, mitochondrial of Rattus norvegicus (Rat).